Consider the following 606-residue polypeptide: UvrABC system protein C (606 aa).

In terms of domain architecture, GIY-YIG spans 19–97 (QSCGVYQMIG…IKSLKPPYNI (79 aa)). The UVR domain maps to 207–242 (EKVKKQLSSTMEKCSKEENYELAAIYRDRLKFLEQI).

The protein belongs to the UvrC family. In terms of assembly, interacts with UvrB in an incision complex.

Its subcellular location is the cytoplasm. Functionally, the UvrABC repair system catalyzes the recognition and processing of DNA lesions. UvrC both incises the 5' and 3' sides of the lesion. The N-terminal half is responsible for the 3' incision and the C-terminal half is responsible for the 5' incision. In Wolbachia sp. subsp. Brugia malayi (strain TRS), this protein is UvrABC system protein C.